The primary structure comprises 473 residues: Lactate utilization protein B 2 (473 aa).

4Fe-4S ferredoxin-type domains lie at 302–332 and 351–380; these read GSEF…GHSY and YDDY…LHDL. [4Fe-4S] cluster contacts are provided by Cys-311, Cys-314, Cys-317, Cys-321, Cys-364, Cys-367, and Cys-371.

The protein belongs to the LutB/YkgF family.

In terms of biological role, is involved in L-lactate degradation and allows cells to grow with lactate as the sole carbon source. Has probably a role as an electron transporter during oxidation of L-lactate. This is Lactate utilization protein B 2 from Bacillus mycoides (strain KBAB4) (Bacillus weihenstephanensis).